We begin with the raw amino-acid sequence, 485 residues long: Homospermidine synthase (485 aa).

Belongs to the saccharopine dehydrogenase family. The cofactor is NAD(+).

It carries out the reaction 2 putrescine = sym-homospermidine + NH4(+). The catalysed reaction is putrescine + spermidine = sym-homospermidine + propane-1,3-diamine. Its function is as follows. Involved in the NAD(+)-dependent synthesis of the polyamine homospermidine from putrescine. This chain is Homospermidine synthase (hss), found in Mesorhizobium japonicum (strain LMG 29417 / CECT 9101 / MAFF 303099) (Mesorhizobium loti (strain MAFF 303099)).